The primary structure comprises 470 residues: Ribulose bisphosphate carboxylase large chain (470 aa).

Substrate-binding residues include Asn-115 and Thr-165. Lys-167 serves as the catalytic Proton acceptor. Lys-169 provides a ligand contact to substrate. Positions 193, 195, and 196 each coordinate Mg(2+). Residue Lys-193 is modified to N6-carboxylysine. The active-site Proton acceptor is the His-286. Substrate contacts are provided by Arg-287, His-319, and Ser-371.

Belongs to the RuBisCO large chain family. Type I subfamily. Heterohexadecamer of 8 large chains and 8 small chains. Mg(2+) serves as cofactor.

The protein localises to the carboxysome. The enzyme catalyses 2 (2R)-3-phosphoglycerate + 2 H(+) = D-ribulose 1,5-bisphosphate + CO2 + H2O. It catalyses the reaction D-ribulose 1,5-bisphosphate + O2 = 2-phosphoglycolate + (2R)-3-phosphoglycerate + 2 H(+). In terms of biological role, ruBisCO catalyzes two reactions: the carboxylation of D-ribulose 1,5-bisphosphate, the primary event in carbon dioxide fixation, as well as the oxidative fragmentation of the pentose substrate in the photorespiration process. Both reactions occur simultaneously and in competition at the same active site. In Synechococcus sp. (strain CC9311), this protein is Ribulose bisphosphate carboxylase large chain.